The chain runs to 139 residues: S-adenosyl-L-methionine-binding protein AF_0241 (139 aa).

Residues 3-133 (LKPIGVVKSP…YSPEIDCVNQ (131 aa)) form the TsaA-like domain. Residues Gln16, 20–22 (PRQ), 58–59 (DK), Arg82, Leu92, and 113–116 (LDGS) contribute to the S-adenosyl-L-methionine site.

This sequence belongs to the tRNA methyltransferase O family. Homodimer.

The sequence is that of S-adenosyl-L-methionine-binding protein AF_0241 from Archaeoglobus fulgidus (strain ATCC 49558 / DSM 4304 / JCM 9628 / NBRC 100126 / VC-16).